Here is an 804-residue protein sequence, read N- to C-terminus: Exo-1,4-beta-xylosidase xlnD (804 aa).

The first 26 residues, 1 to 26, serve as a signal peptide directing secretion; sequence MAHSMSRPVAATAAALLALALPQALA. Residues N29, N124, N148, N242, and N251 are each glycosylated (N-linked (GlcNAc...) asparagine). The active site involves D315. Residues N357, N390, N413, N444, N455, N573, N665, N696, and N718 are each glycosylated (N-linked (GlcNAc...) asparagine).

It belongs to the glycosyl hydrolase 3 family.

The protein localises to the secreted. The enzyme catalyses Hydrolysis of (1-&gt;4)-beta-D-xylans, to remove successive D-xylose residues from the non-reducing termini.. It functions in the pathway glycan degradation; xylan degradation. Its function is as follows. Xylan 1,4-beta-xylosidase involved in the hydrolysis of xylan, a major structural heterogeneous polysaccharide found in plant biomass representing the second most abundant polysaccharide in the biosphere, after cellulose. The sequence is that of Exo-1,4-beta-xylosidase xlnD (xlnD) from Aspergillus awamori (Black koji mold).